Reading from the N-terminus, the 1073-residue chain is 3-hydroxy-3-methylglutaryl-coenzyme A reductase 1 (1073 aa).

The next 8 membrane-spanning stretches (helical) occupy residues 23–43 (FMVV…DDYI), 181–201 (FDIL…IKVF), 211–231 (FWLA…ALLV), 298–318 (HLVV…LTGL), 326–346 (SLIL…ILGL), 399–419 (IAYF…FWLG), 459–479 (GTVV…MVQL), and 498–518 (IISK…VYFL). The SSD domain occupies 182 to 346 (DILLIFVAYL…YTFFSAILGL (165 aa)). Low complexity predominate over residues 542–565 (SSVTATTTTTATGTTSSGAATSKT). The tract at residues 542-589 (SSVTATTTTTATGTTSSGAATSKTIGNNKGLKSVQEIPDNEDESSDEE) is disordered. The segment covering 579-589 (PDNEDESSDEE) has biased composition (acidic residues). The active-site Charge relay system is the Glu-714. 720–726 (STMRGCK) lines the CoA pocket. Residues 781–783 (SRF) and 808–816 (DAMGMNMIS) contribute to the NADP(+) site. Residue Lys-848 is the Charge relay system of the active site. 877-879 (VLK) serves as a coordination point for CoA. Catalysis depends on Asp-924, which acts as the Charge relay system. Residues 997-1017 (IVASAVLAAELSLCSALAAGH) traverse the membrane as a helical segment. 1021–1022 (SH) contacts CoA. Catalysis depends on His-1022, which acts as the Proton donor. Positions 1025-1056 (HNRSKAPAAGATTTTTPAITDSKASNGSIASN) are disordered. 1026–1027 (NR) provides a ligand contact to NADP(+). Low complexity predominate over residues 1030-1042 (APAAGATTTTTPA). Over residues 1046-1055 (SKASNGSIAS) the composition is skewed to polar residues.

The protein belongs to the HMG-CoA reductase family.

Its subcellular location is the endoplasmic reticulum membrane. The catalysed reaction is (R)-mevalonate + 2 NADP(+) + CoA = (3S)-3-hydroxy-3-methylglutaryl-CoA + 2 NADPH + 2 H(+). It functions in the pathway metabolic intermediate biosynthesis; (R)-mevalonate biosynthesis; (R)-mevalonate from acetyl-CoA: step 3/3. In terms of biological role, HMG-CoA reductase; part of the first module of ergosterol biosynthesis pathway that includes the early steps of the pathway, conserved across all eukaryotes, and which results in the formation of mevalonate from acetyl-coenzyme A (acetyl-CoA). HMG1 catalyzes the reduction of hydroxymethylglutaryl-CoA (HMG-CoA) to mevalonate. The first module starts with the action of the cytosolic acetyl-CoA acetyltransferase ERG10 that catalyzes the formation of acetoacetyl-CoA. The hydroxymethylglutaryl-CoA synthase ERG13 then condenses acetyl-CoA with acetoacetyl-CoA to form HMG-CoA. The 3-hydroxy-3-methylglutaryl-coenzyme A (HMG-CoA) reductase HMG1 finally reduces HMG-CoA to produce mevalonate. The protein is 3-hydroxy-3-methylglutaryl-coenzyme A reductase 1 of Candida albicans (strain SC5314 / ATCC MYA-2876) (Yeast).